Here is a 498-residue protein sequence, read N- to C-terminus: Histidine--tRNA ligase (498 aa).

This sequence belongs to the class-II aminoacyl-tRNA synthetase family. In terms of assembly, homodimer.

The protein localises to the cytoplasm. It carries out the reaction tRNA(His) + L-histidine + ATP = L-histidyl-tRNA(His) + AMP + diphosphate + H(+). The chain is Histidine--tRNA ligase from Mycoplasmopsis synoviae (strain 53) (Mycoplasma synoviae).